Reading from the N-terminus, the 356-residue chain is Glutamine synthetase (356 aa).

The GS beta-grasp domain maps to 19-99 (VIAEYIWIGG…VICDTYTPAG (81 aa)). Residues 106 to 356 (KRHGAAKIFS…IAETTLLWKP (251 aa)) enclose the GS catalytic domain.

This sequence belongs to the glutamine synthetase family. As to quaternary structure, homooctamer. Found at highest levels in root nodules.

The protein resides in the cytoplasm. The enzyme catalyses L-glutamate + NH4(+) + ATP = L-glutamine + ADP + phosphate + H(+). This chain is Glutamine synthetase (GLN1), found in Alnus glutinosa (European alder).